Here is a 610-residue protein sequence, read N- to C-terminus: UvrABC system protein C (610 aa).

The GIY-YIG domain occupies 16–94 (SQPGVYRMYD…IKLYQPRYNV (79 aa)). One can recognise a UVR domain in the interval 204–239 (DQVLTQLISRMETASQNLEFEEAARIRDQIQAVRRV).

The protein belongs to the UvrC family. As to quaternary structure, interacts with UvrB in an incision complex.

It localises to the cytoplasm. Functionally, the UvrABC repair system catalyzes the recognition and processing of DNA lesions. UvrC both incises the 5' and 3' sides of the lesion. The N-terminal half is responsible for the 3' incision and the C-terminal half is responsible for the 5' incision. This Escherichia coli O1:K1 / APEC protein is UvrABC system protein C.